A 71-amino-acid polypeptide reads, in one-letter code: DNA-directed RNA polymerases II, IV and V subunit 10 (71 aa).

Positions 7, 10, 44, and 45 each coordinate Zn(2+).

Belongs to the archaeal Rpo10/eukaryotic RPB10 RNA polymerase subunit family. In terms of assembly, component of the RNA polymerase II, IV and V complexes. Interacts with NRPD1.

It localises to the nucleus. Its function is as follows. DNA-dependent RNA polymerase catalyzes the transcription of DNA into RNA using the four ribonucleoside triphosphates as substrates. Component of RNA polymerase II which synthesizes mRNA precursors and many functional non-coding RNAs. Pol II is the central component of the basal RNA polymerase II transcription machinery. It is composed of mobile elements that move relative to each other. Component of RNA polymerases IV and V which mediate short-interfering RNAs (siRNA) accumulation and subsequent RNA-directed DNA methylation-dependent (RdDM) transcriptional gene silencing (TGS) of endogenous repeated sequences, including transposable elements. This Arabidopsis thaliana (Mouse-ear cress) protein is DNA-directed RNA polymerases II, IV and V subunit 10 (NRPB10).